A 147-amino-acid chain; its full sequence is Myoglobin (147 aa).

A Globin domain is found at 2-141 (ADFDAVLKFW…FIADMDANYK (140 aa)). Histidine 60 provides a ligand contact to nitrite. Histidine 60 is a binding site for O2. Histidine 89 serves as a coordination point for heme b.

It belongs to the globin family. In terms of assembly, monomeric.

The protein localises to the cytoplasm. The protein resides in the sarcoplasm. The enzyme catalyses Fe(III)-heme b-[protein] + nitric oxide + H2O = Fe(II)-heme b-[protein] + nitrite + 2 H(+). It catalyses the reaction H2O2 + AH2 = A + 2 H2O. Monomeric heme protein which primary function is to store oxygen and facilitate its diffusion within muscle tissues. Reversibly binds oxygen through a pentacoordinated heme iron and enables its timely and efficient release as needed during periods of heightened demand. Depending on the oxidative conditions of tissues and cells, and in addition to its ability to bind oxygen, it also has a nitrite reductase activity whereby it regulates the production of bioactive nitric oxide. Under stress conditions, like hypoxia and anoxia, it also protects cells against reactive oxygen species thanks to its pseudoperoxidase activity. The polypeptide is Myoglobin (mb) (Scomber japonicus (Chub mackerel)).